Consider the following 175-residue polypeptide: Large ribosomal subunit protein uL10 (175 aa).

It belongs to the universal ribosomal protein uL10 family. In terms of assembly, part of the ribosomal stalk of the 50S ribosomal subunit. The N-terminus interacts with L11 and the large rRNA to form the base of the stalk. The C-terminus forms an elongated spine to which L12 dimers bind in a sequential fashion forming a multimeric L10(L12)X complex.

Forms part of the ribosomal stalk, playing a central role in the interaction of the ribosome with GTP-bound translation factors. This Mycobacterium sp. (strain KMS) protein is Large ribosomal subunit protein uL10.